Here is a 289-residue protein sequence, read N- to C-terminus: Oxaloacetate decarboxylase (289 aa).

Residue serine 50 participates in substrate binding. Residue aspartate 88 participates in Mg(2+) binding. Positions 159 and 235 each coordinate substrate.

It belongs to the isocitrate lyase/PEP mutase superfamily. Oxaloacetate decarboxylase family. In terms of assembly, homotetramer; dimer of dimers. Requires Mg(2+) as cofactor.

It carries out the reaction oxaloacetate + H(+) = pyruvate + CO2. Its function is as follows. Catalyzes the decarboxylation of oxaloacetate into pyruvate. Seems to play a role in maintaining cellular concentrations of bicarbonate and pyruvate. The chain is Oxaloacetate decarboxylase from Pseudomonas syringae pv. tomato (strain ATCC BAA-871 / DC3000).